The primary structure comprises 297 residues: Phosphatidylserine decarboxylase proenzyme (297 aa).

Active-site charge relay system; for autoendoproteolytic cleavage activity residues include aspartate 112, histidine 168, and serine 255. Catalysis depends on serine 255, which acts as the Schiff-base intermediate with substrate; via pyruvic acid; for decarboxylase activity. Serine 255 carries the post-translational modification Pyruvic acid (Ser); by autocatalysis.

It belongs to the phosphatidylserine decarboxylase family. PSD-B subfamily. Prokaryotic type II sub-subfamily. Heterodimer of a large membrane-associated beta subunit and a small pyruvoyl-containing alpha subunit. Requires pyruvate as cofactor. Post-translationally, is synthesized initially as an inactive proenzyme. Formation of the active enzyme involves a self-maturation process in which the active site pyruvoyl group is generated from an internal serine residue via an autocatalytic post-translational modification. Two non-identical subunits are generated from the proenzyme in this reaction, and the pyruvate is formed at the N-terminus of the alpha chain, which is derived from the carboxyl end of the proenzyme. The autoendoproteolytic cleavage occurs by a canonical serine protease mechanism, in which the side chain hydroxyl group of the serine supplies its oxygen atom to form the C-terminus of the beta chain, while the remainder of the serine residue undergoes an oxidative deamination to produce ammonia and the pyruvoyl prosthetic group on the alpha chain. During this reaction, the Ser that is part of the protease active site of the proenzyme becomes the pyruvoyl prosthetic group, which constitutes an essential element of the active site of the mature decarboxylase.

The protein localises to the cell membrane. It catalyses the reaction a 1,2-diacyl-sn-glycero-3-phospho-L-serine + H(+) = a 1,2-diacyl-sn-glycero-3-phosphoethanolamine + CO2. The protein operates within phospholipid metabolism; phosphatidylethanolamine biosynthesis; phosphatidylethanolamine from CDP-diacylglycerol: step 2/2. Catalyzes the formation of phosphatidylethanolamine (PtdEtn) from phosphatidylserine (PtdSer). The sequence is that of Phosphatidylserine decarboxylase proenzyme from Clostridium tetani (strain Massachusetts / E88).